Reading from the N-terminus, the 157-residue chain is Endoribonuclease YbeY (157 aa).

Zn(2+)-binding residues include His122, His126, and His132.

It belongs to the endoribonuclease YbeY family. The cofactor is Zn(2+).

The protein localises to the cytoplasm. Single strand-specific metallo-endoribonuclease involved in late-stage 70S ribosome quality control and in maturation of the 3' terminus of the 16S rRNA. This chain is Endoribonuclease YbeY, found in Bacillus subtilis (strain 168).